The chain runs to 866 residues: Fibrinogen alpha chain (866 aa).

The first 19 residues, 1 to 19 (MFSMRIVCLVLSVVGTAWT), serve as a signal peptide directing secretion. At Ser22 the chain carries Phosphoserine. Positions 36–38 (GPR) are alpha-chain polymerization, binding distal domain of another fibrin gamma chain. Position 45 is a phosphoserine; by FAM20C (Ser45). Position 50 is a phosphoserine (Ser50). Ser56 carries the post-translational modification Phosphoserine; by FAM20C. The stretch at 68 to 631 (CRMKGLIDEV…GHAKSRPVRD (564 aa)) forms a coiled coil. The interval 262–460 (ERPGGNEITR…SGSTTTTRRS (199 aa)) is disordered. Residues 270-299 (TRGGSTSYGTGSETESPRNPSSAGSWNSGS) are compositionally biased toward low complexity. Ser281, Ser291, and Ser294 each carry phosphoserine. O-linked (GalNAc...) threonine glycosylation is present at Thr320. Lys322 participates in a covalent cross-link: Isoglutamyl lysine isopeptide (Lys-Gln) (interchain with Q-41 in alpha-2-antiplasmin). Residue Gln347 forms an Isoglutamyl lysine isopeptide (Gln-Lys) (interchain with K-?) linkage. An O-linked (GalNAc...) serine glycan is attached at Ser351. The segment covering 354-391 (PGSTGTWNPGSSERGSAGHWTSESSVSGSTGQWHSESG) has biased composition (polar residues). At Ser364 the chain carries Phosphoserine; by FAM20C. An Isoglutamyl lysine isopeptide (Gln-Lys) (interchain with K-?) cross-link involves residue Gln385. Thr412 bears the Phosphothreonine mark. Over residues 424–449 (TRREYHTEKLVTSKGDKELRTGKEKV) the composition is skewed to basic and acidic residues. Low complexity predominate over residues 450–460 (TSGSTTTTRRS). A Phosphoserine modification is found at Ser451. An N-linked (GlcNAc...) asparagine; in variant Caracas-2 glycan is attached at Ser453. An intrachain disulfide couples Cys461 to Cys491. Residue Ser501 is modified to Phosphoserine. The residue at position 505 (Thr505) is a Phosphothreonine. At Ser524 the chain carries Phosphoserine; by FAM20C. Residues Lys527 and Lys558 each participate in an isoglutamyl lysine isopeptide (Lys-Gln) (interchain with Q-?) cross-link. The disordered stretch occupies residues 543-638 (ETESRGSESG…VRDCDDVLQT (96 aa)). The residue at position 560 (Ser560) is a Phosphoserine; by FAM20C. Pro565 is subject to 4-hydroxyproline; by P4HA1. Isoglutamyl lysine isopeptide (Lys-Gln) (interchain with Q-?) cross-links involve residues Lys575, Lys581, and Lys599. The span at 575–589 (KSSSYSKQFTSSTSY) shows a compositional bias: low complexity. The segment covering 594-617 (STFESKSYKMADEAGSEADHEGTH) has biased composition (basic and acidic residues). Ser609 bears the Phosphoserine; by FAM20C mark. Basic residues predominate over residues 618 to 627 (STKRGHAKSR). The Fibrinogen C-terminal domain occupies 623–864 (HAKSRPVRDC…AVRMKIRPLV (242 aa)). An N-linked (GlcNAc...) asparagine glycan is attached at Asn686. The Ca(2+) site is built by Asp791, Asp793, Trp795, and Glu797. Cys799 and Cys812 form a disulfide bridge.

In terms of assembly, heterohexamer; disulfide linked. Contains 2 sets of 3 non-identical chains (alpha, beta and gamma). The 2 heterotrimers are in head to head conformation with the N-termini in a small central domain. As to quaternary structure, (Microbial infection) Interacts with Staphylococcus aureus protein Fib; this interaction inhibits fibrinogen-dependent platelet aggregation and protects the bacteria form phagocytosis. Post-translationally, the alpha chain is normally not N-glycosylated, even though glycosylation at Asn-686 was observed when a fragment of the protein was expressed in insect cells. It is well known that heterologous expression of isolated domains can lead to adventitious protein modifications. Besides, glycosylation at Asn-686 is supported by large-scale glycoproteomics studies, but the evidence is still quite tenuous. Most likely, Asn-686 is not glycosylated in the healthy human body, or only with low efficiency. In terms of processing, O-glycosylated. Forms F13A-mediated cross-links between a glutamine and the epsilon-amino group of a lysine residue, forming fibronectin-fibrinogen heteropolymers. Post-translationally, about one-third of the alpha chains in the molecules in blood were found to be phosphorylated. In terms of processing, conversion of fibrinogen to fibrin is triggered by thrombin, which cleaves fibrinopeptides A and B from alpha and beta chains, and thus exposes the N-terminal polymerization sites responsible for the formation of the soft clot. The soft clot is converted into the hard clot by factor XIIIA which catalyzes the epsilon-(gamma-glutamyl)lysine cross-linking between gamma chains (stronger) and between alpha chains (weaker) of different monomers. Phosphorylated by FAM20C in the extracellular medium. In terms of tissue distribution, detected in blood plasma (at protein level).

The protein localises to the secreted. Cleaved by the protease thrombin to yield monomers which, together with fibrinogen beta (FGB) and fibrinogen gamma (FGG), polymerize to form an insoluble fibrin matrix. Fibrin has a major function in hemostasis as one of the primary components of blood clots. In addition, functions during the early stages of wound repair to stabilize the lesion and guide cell migration during re-epithelialization. Was originally thought to be essential for platelet aggregation, based on in vitro studies using anticoagulated blood. However, subsequent studies have shown that it is not absolutely required for thrombus formation in vivo. Enhances expression of SELP in activated platelets via an ITGB3-dependent pathway. Maternal fibrinogen is essential for successful pregnancy. Fibrin deposition is also associated with infection, where it protects against IFNG-mediated hemorrhage. May also facilitate the immune response via both innate and T-cell mediated pathways. This is Fibrinogen alpha chain (FGA) from Homo sapiens (Human).